The sequence spans 631 residues: tRNA uridine 5-carboxymethylaminomethyl modification enzyme MnmG (631 aa).

14-19 (GGGHAG) is a binding site for FAD. 274–288 (GPRYCPSIEDKIHRF) contributes to the NAD(+) binding site.

Belongs to the MnmG family. Homodimer. Heterotetramer of two MnmE and two MnmG subunits. Requires FAD as cofactor.

Its subcellular location is the cytoplasm. In terms of biological role, NAD-binding protein involved in the addition of a carboxymethylaminomethyl (cmnm) group at the wobble position (U34) of certain tRNAs, forming tRNA-cmnm(5)s(2)U34. The polypeptide is tRNA uridine 5-carboxymethylaminomethyl modification enzyme MnmG (Pseudomonas paraeruginosa (strain DSM 24068 / PA7) (Pseudomonas aeruginosa (strain PA7))).